The chain runs to 169 residues: Probable chemoreceptor glutamine deamidase CheD (169 aa).

Belongs to the CheD family.

It catalyses the reaction L-glutaminyl-[protein] + H2O = L-glutamyl-[protein] + NH4(+). Probably deamidates glutamine residues to glutamate on methyl-accepting chemotaxis receptors (MCPs), playing an important role in chemotaxis. The polypeptide is Probable chemoreceptor glutamine deamidase CheD (Solibacter usitatus (strain Ellin6076)).